The primary structure comprises 291 residues: Pituitary-specific positive transcription factor 1 (291 aa).

The short motif at 5–13 (PFTSTDTFI) is the 9aaTAD element. Positions 124–198 (MDSPEIRELE…ILSKWLEEAE (75 aa)) constitute a POU-specific domain. Positions 214–273 (KRKRRTTISIAAKDALERHFGEQNKPSSQEILRMAEELNLEKEVVRVWFCNRRQREKRVK) form a DNA-binding region, homeobox.

The protein belongs to the POU transcription factor family. Class-1 subfamily. In terms of assembly, interacts with PITX1. Interacts with LHX3. Interacts with ELK1.

It localises to the nucleus. In terms of biological role, transcription factor involved in the specification of the lactotrope, somatotrope, and thyrotrope phenotypes in the developing anterior pituitary. Activates growth hormone and prolactin genes. Specifically binds to the consensus sequence 5'-TAAAT-3'. The sequence is that of Pituitary-specific positive transcription factor 1 (POU1F1) from Bos taurus (Bovine).